The chain runs to 1014 residues: Klotho (1014 aa).

Residues 1–35 (MPASAPPRRPRPPPPSLSLSLLLVLLGLAGRRLRA) form the signal peptide. Over 36-983 (EPGDGAQTWA…ECSFFHTRKP (948 aa)) the chain is Extracellular. Glycosyl hydrolase-1 stretches follow at residues 59-508 (FQGT…KNGF) and 517-955 (LEGT…SNGF). N-linked (GlcNAc...) asparagine glycosylation is found at N161, N285, N346, N609, N614, and N696. Residues 984-1004 (LVAFIAFLFFAFIVSLSLIFY) traverse the membrane as a helical segment. Topologically, residues 1005-1014 (YSKKGRRRYQ) are cytoplasmic.

The protein belongs to the glycosyl hydrolase 1 family. Klotho subfamily. Homodimer. Interacts with FGF23 and FGFR1.

The protein localises to the cell membrane. It localises to the apical cell membrane. The protein resides in the secreted. It carries out the reaction a beta-D-glucuronoside + H2O = D-glucuronate + an alcohol. In terms of biological role, may have weak glycosidase activity towards glucuronylated steroids. However, it lacks essential active site Glu residues at positions 241 and 874, suggesting it may be inactive as a glycosidase in vivo. May be involved in the regulation of calcium and phosphorus homeostasis by inhibiting the synthesis of active vitamin D. Essential factor for the specific interaction between FGF23 and FGFR1. The Klotho peptide generated by cleavage of the membrane-bound isoform may be an anti-aging circulating hormone which would extend life span by inhibiting insulin/IGF1 signaling. The sequence is that of Klotho (KL) from Macaca fascicularis (Crab-eating macaque).